The following is a 123-amino-acid chain: Small ribosomal subunit protein uS12 (123 aa).

At Asp89 the chain carries 3-methylthioaspartic acid.

Belongs to the universal ribosomal protein uS12 family. In terms of assembly, part of the 30S ribosomal subunit. Contacts proteins S8 and S17. May interact with IF1 in the 30S initiation complex.

Functionally, with S4 and S5 plays an important role in translational accuracy. Its function is as follows. Interacts with and stabilizes bases of the 16S rRNA that are involved in tRNA selection in the A site and with the mRNA backbone. Located at the interface of the 30S and 50S subunits, it traverses the body of the 30S subunit contacting proteins on the other side and probably holding the rRNA structure together. The combined cluster of proteins S8, S12 and S17 appears to hold together the shoulder and platform of the 30S subunit. This Rhodospirillum centenum (strain ATCC 51521 / SW) protein is Small ribosomal subunit protein uS12.